The following is a 227-amino-acid chain: 7-cyano-7-deazaguanine synthase (227 aa).

Position 8-18 (8-18) interacts with ATP; the sequence is LSGGLDSATVL. 4 residues coordinate Zn(2+): C191, C201, C204, and C207.

This sequence belongs to the QueC family. Zn(2+) is required as a cofactor.

It carries out the reaction 7-carboxy-7-deazaguanine + NH4(+) + ATP = 7-cyano-7-deazaguanine + ADP + phosphate + H2O + H(+). It participates in purine metabolism; 7-cyano-7-deazaguanine biosynthesis. In terms of biological role, catalyzes the ATP-dependent conversion of 7-carboxy-7-deazaguanine (CDG) to 7-cyano-7-deazaguanine (preQ(0)). In Paramagnetospirillum magneticum (strain ATCC 700264 / AMB-1) (Magnetospirillum magneticum), this protein is 7-cyano-7-deazaguanine synthase.